Reading from the N-terminus, the 777-residue chain is MAEVSAKSVTVEEMAEEDDAAIEERWSLYEAYNELHALAQELETPFEAPAVLVVGQQTDGKSALVEALMGFQFNHVGGGTKTRRPITLHMKYDPQCQFPLCHLGSDDDPSVSLPKSLSQIQAYIEAENMRLEQEPCSPFSAKEIIVKVQYKYCPNLTIIDTPGLIAPAPGLKNRALQVQARAVEALVRAKMQHKEFIILCLEDSSDWSIATTRRIVMQVDPELSRTIVVSTKLDTKIPQFSCSSDVEVFLSPPASALDSSLLGDSPFFTSVPSGRVGYGQDSVYKSNDEFKQAVSLREMEDIASLEKKLGRLLTKQEKSRIGISKLRLFLEELLWKRYKESVPLIIPLLGKEYRSTVRKLDTVSKELSSLDEAKLKERGRTFHDLFLTKLSLLLKGTVVAPPDKFGETLQDERTQGGAFVGTDGLQFSHKLIPNAGMRLYGGAQYHRAMAEFRFLVGAIKCPPITREEIVNACGVEDIHDGTNYSRTACVIAVAKARETFEPFLHQLGARLLHILKRLLPISVYLLQKEGEYLSGHEVFLKRVASAFNSFVESTEKSCRDKCMEDLASTTRYVTWSLHNKNRAGLRQFLDSFGGTEHNTTSGNAIGFSLPQDALGGTTDTKSRSDVKLSHLASNIDSGSSIQTTEMRLADLLDSTLWNRKLAPSSERIVYALVQQIFQGIREYFLASAELKFNCFLLMPIVDKLPALLREELENAFEDDLDSIFDITNLRQSLDQKKRSTEIELRRIKRIKEKFRVMNEKLNSHEFAQNLKAPSVQH.

The 299-residue stretch at proline 45–proline 343 folds into the Dynamin-type G domain. Residues glycine 55–serine 62 are G1 motif. A GTP-binding site is contributed by glycine 55–serine 62. The interval lysine 81–arginine 83 is G2 motif. Positions aspartate 160–glycine 163 are G3 motif. Residues aspartate 160–leucine 164 and threonine 231–aspartate 234 contribute to the GTP site. A G4 motif region spans residues threonine 231 to aspartate 234. A G5 motif region spans residues serine 265–phenylalanine 268. Coiled coils occupy residues glutamate 300–arginine 320 and asparagine 728–glutamate 765.

It belongs to the TRAFAC class dynamin-like GTPase superfamily. Dynamin/Fzo/YdjA family. Forms a homodimer and heterodimers with DRP3A and DRP3B on peroxisomes. Also interacts with FIS1A (but not FIS1B) and PEX11 proteins (PEX11A, PEX11B, PEX11C, PEX11D and PEX11E) on peroxisomes. Interacts with PDV1 and PDV2. Post-translationally, stabilized at the plastid outer envelope membranes (OEMs) in the constriction site when in complex with GTP, but destabilized after conversion of GTP into GDP leading to turnover with a cytosolic pool.

The protein localises to the cytoplasm. Its subcellular location is the plastid. It is found in the chloroplast outer membrane. The protein resides in the peroxisome. It localises to the cytosol. The catalysed reaction is GTP + H2O = GDP + phosphate + H(+). Its activity is regulated as follows. GTPase activity is repressed by PDV2 thus increasing stability at the plastid outer envelope membranes (OEMs) periphery. Its function is as follows. Mechanochemical GTPase component of both plastid and peroxisome division machinery. Required for the last steps of plastid division specifically in mesophyll-cell, when the narrow isthmus breaks, facilitating the separation of the daughter plastids. Necessary for peroxisome activities. Seems to influence stromule (stroma-filled tubular extensions of the plastid envelope membrane) length and frequency. This chain is Dynamin-like protein ARC5, found in Arabidopsis thaliana (Mouse-ear cress).